The following is a 234-amino-acid chain: Glucosamine-6-phosphate deaminase (234 aa).

The active-site Proton acceptor; for enolization step is the D62. N128 acts as the For ring-opening step in catalysis. H130 functions as the Proton acceptor; for ring-opening step in the catalytic mechanism. Residue E135 is the For ring-opening step of the active site.

The protein belongs to the glucosamine/galactosamine-6-phosphate isomerase family. NagB subfamily.

The enzyme catalyses alpha-D-glucosamine 6-phosphate + H2O = beta-D-fructose 6-phosphate + NH4(+). The protein operates within amino-sugar metabolism; N-acetylneuraminate degradation; D-fructose 6-phosphate from N-acetylneuraminate: step 5/5. Its function is as follows. Catalyzes the reversible isomerization-deamination of glucosamine 6-phosphate (GlcN6P) to form fructose 6-phosphate (Fru6P) and ammonium ion. This Streptococcus equi subsp. zooepidemicus (strain H70) protein is Glucosamine-6-phosphate deaminase.